A 286-amino-acid chain; its full sequence is Oxidase hkm6 (286 aa).

His16, His25, and His215 together coordinate Cu cation.

It belongs to the tyrosinase family. Cu(2+) serves as cofactor.

The protein operates within secondary metabolite biosynthesis. Oxidase; part of the gene cluster that mediates the biosynthesis of hancockiamides, an unusual new family of N-cinnamoylated piperazines. The NRPS hkm10 and the NmrA-like reductase hkm9 are proposed to convert two molecules of L-Phe to the intermediary piperazine called xenocockiamide A. Xenocockiamide A is then converted to hancockiamide D via a series of hydroxylations and O-methylations. The tyrosinase hkm6 may catalyze an aromatic hydroxylation, then the 2-oxoglutarate-dependent Fe(II) dioxygenase hkm4 and the FAD-dependent phenol hydroxylase hkm7 may catalyze consecutive hydroxylations to install 2 more hydroxy groups, and the methyltransferase hkm8 probably catalyzes two methylations using 2 molecules of S-adenosyl-L-methionine (SAM). The NRPS hkm11 activates and transfers trans-cinnamate supplied by the PAL hkm12 to hancockiamide D and produces hancockiamide A. NRPS Hkm11 has the flexibility to tolerate the bulky hancockiamide G as a substrate and the absence of the acetyl-transferase hkm3 opens up the opportunity for hkm11 to introduce a second N-cinnamoyl moiety. The cytochrome P450 monooxygenase hkm5 catalyzes the methylenedioxy bridge formation, converting hancockiamide A into hancockiamide G. Hkm5 can also convert hancockiamide B into hancockiamide C, and hancockiamide D into hancockiamide H. The N-acetyltransferase hkm3 finally transfers an acetyl group to 1-N of piperazine, converting hancockiamide A into hancockiamide B and hancockiamide G into hancockiamide C. This chain is Oxidase hkm6, found in Aspergillus hancockii.